Here is a 176-residue protein sequence, read N- to C-terminus: Ribosome maturation factor RimM (176 aa).

Residues 100-173 (KDEYHYHDLI…WLLINPPPGL (74 aa)) form the PRC barrel domain.

This sequence belongs to the RimM family. In terms of assembly, binds ribosomal protein uS19.

The protein localises to the cytoplasm. In terms of biological role, an accessory protein needed during the final step in the assembly of 30S ribosomal subunit, possibly for assembly of the head region. Essential for efficient processing of 16S rRNA. May be needed both before and after RbfA during the maturation of 16S rRNA. It has affinity for free ribosomal 30S subunits but not for 70S ribosomes. This is Ribosome maturation factor RimM from Prochlorococcus marinus (strain NATL2A).